Here is a 178-residue protein sequence, read N- to C-terminus: Large ribosomal subunit protein uL5 (178 aa).

Belongs to the universal ribosomal protein uL5 family. As to quaternary structure, part of the 50S ribosomal subunit; part of the 5S rRNA/L5/L18/L25 subcomplex. Contacts the 5S rRNA and the P site tRNA. Forms a bridge to the 30S subunit in the 70S ribosome.

Its function is as follows. This is one of the proteins that bind and probably mediate the attachment of the 5S RNA into the large ribosomal subunit, where it forms part of the central protuberance. In the 70S ribosome it contacts protein S13 of the 30S subunit (bridge B1b), connecting the 2 subunits; this bridge is implicated in subunit movement. Contacts the P site tRNA; the 5S rRNA and some of its associated proteins might help stabilize positioning of ribosome-bound tRNAs. The sequence is that of Large ribosomal subunit protein uL5 from Wolbachia pipientis subsp. Culex pipiens (strain wPip).